We begin with the raw amino-acid sequence, 172 residues long: Cytochrome b6-f complex iron-sulfur subunit (172 aa).

Residues 17-39 traverse the membrane as a helical segment; the sequence is VFLNALLSSSVGVVVVGTLYPVV. The region spanning 61–161 is the Rieske domain; that stretch reads GKPISVSELL…ATVDGDNVRF (101 aa). Residues Cys-107, His-109, Cys-125, and His-128 each coordinate [2Fe-2S] cluster. A disulfide bridge connects residues Cys-112 and Cys-127.

This sequence belongs to the Rieske iron-sulfur protein family. As to quaternary structure, the 4 large subunits of the cytochrome b6-f complex are cytochrome b6, subunit IV (17 kDa polypeptide, PetD), cytochrome f and the Rieske protein, while the 4 small subunits are PetG, PetL, PetM and PetN. The complex functions as a dimer. [2Fe-2S] cluster serves as cofactor.

The protein resides in the cellular thylakoid membrane. The enzyme catalyses 2 oxidized [plastocyanin] + a plastoquinol + 2 H(+)(in) = 2 reduced [plastocyanin] + a plastoquinone + 4 H(+)(out). In terms of biological role, component of the cytochrome b6-f complex, which mediates electron transfer between photosystem II (PSII) and photosystem I (PSI), cyclic electron flow around PSI, and state transitions. The sequence is that of Cytochrome b6-f complex iron-sulfur subunit from Synechococcus sp. (strain JA-3-3Ab) (Cyanobacteria bacterium Yellowstone A-Prime).